The sequence spans 432 residues: Trigger factor (432 aa).

The region spanning 161 to 246 is the PPIase FKBP-type domain; that stretch reads EDRVTIDFTG…LKKVEERELP (86 aa).

This sequence belongs to the FKBP-type PPIase family. Tig subfamily. As to quaternary structure, homodimer and monomer. In vivo most of the ribosomes are in complex with monomeric TF. Uncomplexed TF, however, is in a monomer-dimer equilibrium with approximately two thirds of TF existing in a dimeric state.

It is found in the cytoplasm. It catalyses the reaction [protein]-peptidylproline (omega=180) = [protein]-peptidylproline (omega=0). Functionally, involved in protein export. Acts as a chaperone by maintaining the newly synthesized protein in an open conformation. Functions as a peptidyl-prolyl cis-trans isomerase. The protein is Trigger factor of Escherichia coli O139:H28 (strain E24377A / ETEC).